We begin with the raw amino-acid sequence, 192 residues long: MLKKTVLGLTAGAMLLSAGSALAADYKIDKQGQHAFIEFRIQHLGYSWLYGTFKDFDGGFTFDEKDPSKDKVNVTINTASVDTNHAERDKHLRSAEFLNVEKNKQAKFESTEVKKNGEGYAVVGNLTLNGVTKPVTLDAKLIGQGNDPWGGYRAGFEANGKIKLKDFGITTDLGPASQDVELIISVEGVRAK.

The first 23 residues, 1 to 23 (MLKKTVLGLTAGAMLLSAGSALA), serve as a signal peptide directing secretion.

This sequence belongs to the UPF0312 family. Type 1 subfamily.

The protein resides in the periplasm. In Serratia proteamaculans (strain 568), this protein is UPF0312 protein Spro_1887.